Reading from the N-terminus, the 257-residue chain is Ubiquinone biosynthesis O-methyltransferase (257 aa).

4 residues coordinate S-adenosyl-L-methionine: Arg-43, Gly-77, Asp-98, and Met-144.

The protein belongs to the methyltransferase superfamily. UbiG/COQ3 family.

The catalysed reaction is a 3-demethylubiquinol + S-adenosyl-L-methionine = a ubiquinol + S-adenosyl-L-homocysteine + H(+). It catalyses the reaction a 3-(all-trans-polyprenyl)benzene-1,2-diol + S-adenosyl-L-methionine = a 2-methoxy-6-(all-trans-polyprenyl)phenol + S-adenosyl-L-homocysteine + H(+). The protein operates within cofactor biosynthesis; ubiquinone biosynthesis. In terms of biological role, O-methyltransferase that catalyzes the 2 O-methylation steps in the ubiquinone biosynthetic pathway. The chain is Ubiquinone biosynthesis O-methyltransferase from Psychrobacter cryohalolentis (strain ATCC BAA-1226 / DSM 17306 / VKM B-2378 / K5).